The sequence spans 155 residues: DNA gyrase inhibitor (155 aa).

It belongs to the DNA gyrase inhibitor family. In terms of assembly, interacts with DNA gyrase.

The protein resides in the cytoplasm. Its function is as follows. Inhibits the supercoiling activity of DNA gyrase. Acts by inhibiting DNA gyrase at an early step, prior to (or at the step of) binding of DNA by the gyrase. It protects cells against toxins that target DNA gyrase, by inhibiting activity of these toxins and reducing the formation of lethal double-strand breaks in the cell. The sequence is that of DNA gyrase inhibitor from Citrobacter koseri (strain ATCC BAA-895 / CDC 4225-83 / SGSC4696).